The sequence spans 323 residues: Ubiquinone biosynthesis protein COQ4, mitochondrial (323 aa).

Residues 1–29 constitute a mitochondrion transit peptide; that stretch reads MLKSTVSNTRIKCCRIDQRRNYLFTALAS. Zn(2+)-binding residues include His205, Asp206, His209, and Glu221.

It belongs to the COQ4 family. In terms of assembly, component of a multi-subunit COQ enzyme complex, composed of at least COQ3, COQ4, COQ5, COQ6, COQ7 and COQ9. Requires Zn(2+) as cofactor.

The protein localises to the mitochondrion inner membrane. It carries out the reaction a 4-hydroxy-3-methoxy-5-(all-trans-polyprenyl)benzoate + H(+) = a 2-methoxy-6-(all-trans-polyprenyl)phenol + CO2. The protein operates within cofactor biosynthesis; ubiquinone biosynthesis. In terms of biological role, lyase that catalyzes the C1-decarboxylation of 4-hydroxy-3-methoxy-5-(all-trans-polyprenyl)benzoic acid into 2-methoxy-6-(all-trans-polyprenyl)phenol during ubiquinone biosynthesis. The protein is Ubiquinone biosynthesis protein COQ4, mitochondrial of Candida dubliniensis (strain CD36 / ATCC MYA-646 / CBS 7987 / NCPF 3949 / NRRL Y-17841) (Yeast).